We begin with the raw amino-acid sequence, 323 residues long: Phosphatidylethanolamine:ceramide ethanolaminephosphotransferase (323 aa).

Residues 1–26 (MAVPPVEMYSGSFWNRMRKPLPLRTQ) are Cytoplasmic-facing. The chain crosses the membrane as a helical span at residues 27-47 (VIRFTVVFVIVSFILVVALQI). Topologically, residues 48-74 (THERMPDPKVTKPLPDLGFELLTKVPG) are extracellular. The chain crosses the membrane as a helical span at residues 75 to 95 (MYVLADCCIGFLNILSVFTAF). Residues 96–147 (KLYLLHRHCVGSGEPELPCNIPGVSRFFLSVWLCKENCRIELRNIHTIAWIR) are Cytoplasmic-facing. The helical transmembrane segment at 148-168 (FITSYALLLLSRSIIMVVTSL) threads the bilayer. Over 169-187 (PNPDDLCQNPPKIENRVKD) the chain is Extracellular. The helical transmembrane segment at 188-208 (ILLTVLTAGAGSIHCGDLMYS) threads the bilayer. Over 209 to 233 (GHTVILTLHLMFHWIYGAMVHWSFR) the chain is Cytoplasmic. Residues 234 to 254 (PVVTVVAIFGYYCIVASRFHY) traverse the membrane as a helical segment. At 255 to 257 (TDD) the chain is on the extracellular side. A helical transmembrane segment spans residues 258–278 (VLVAIYLTIATFIAVGHNADG). Topologically, residues 279-323 (APWQLQLFIRWWPCCGANSREVAEDGVPVAIVIKNEEMMNFEGKS) are cytoplasmic.

Belongs to the sphingomyelin synthase family.

It is found in the membrane. The enzyme catalyses an N-acylsphing-4-enine + a 1,2-diacyl-sn-glycero-3-phosphoethanolamine = an N-acylsphing-4-enine 1-phosphoethanolamine + a 1,2-diacyl-sn-glycerol. It carries out the reaction an N-acylsphinganine + a 1,2-diacyl-sn-glycero-3-phosphoethanolamine = an N-acylsphinganine-1-phosphoethanolamine + a 1,2-diacyl-sn-glycerol. Functionally, predominantly synthesizes ethanolamine-phosphorylceramide (EPC), with minimal sphingomyelin (SM)/inositol phosphorylceramide (IPC) synthase activity. Specificity is likely to be defined by residues in the lumenal catalytic domain that interact with the polar head groups of the phospholipid donors. EPC is synthesized by both stages of the parasite life cycle, bloodstream forms (BSF) and procyclic forms (PCF), by transferring the phosphoethanolamine from a 1,2-diacyl-sn-glycero-3-phosphoethanolamine to an N-acylsphing-4-enine (ceramide) or an N-acylsphinganine (dihydroceramide). Similarly, SM is synthesized by transferring the phosphocholine from a 1,2-diacyl-sn-glycero-3-phosphocholine to ceramide or dihydroceramide by BSF and PCF, while IPC is confined to PCF. The ceramide/dihydroceramide ratios are skewed towards dihydroceramide in PCF parasites and ceramide in BSF parasites, this is likely due to differential expression and/or regulation of dihydroceramide desaturase, the enzyme responsible for converting dihydroceramide to ceramide. The protein is Phosphatidylethanolamine:ceramide ethanolaminephosphotransferase of Trypanosoma brucei brucei.